The chain runs to 131 residues: Small ribosomal subunit protein uS8 (131 aa).

It belongs to the universal ribosomal protein uS8 family. In terms of assembly, part of the 30S ribosomal subunit. Contacts proteins S5 and S12.

One of the primary rRNA binding proteins, it binds directly to 16S rRNA central domain where it helps coordinate assembly of the platform of the 30S subunit. The sequence is that of Small ribosomal subunit protein uS8 from Acidovorax sp. (strain JS42).